Reading from the N-terminus, the 504-residue chain is Sodium-coupled neutral amino acid symporter 2 (504 aa).

Residues 1–28 (MNKAPAQMSRFNIAPDMDSSSTNSNEYT) form a disordered region. The Cytoplasmic portion of the chain corresponds to 1-79 (MNKAPAQMSR…SPGSASFGMS (79 aa)). The interval 1–99 (MNKAPAQMSR…SGILGLSYAM (99 aa)) is regulates protein turnover upon amino acid deprivation. A compositionally biased stretch (low complexity) spans 19 to 28 (SSSTNSNEYT). Residues 80–99 (VFNLGNAIMGSGILGLSYAM) form a helical membrane-spanning segment. Na(+) is bound at residue N85. Over 100–105 (ANTGIA) the chain is Extracellular. The helical transmembrane segment at 106–126 (MFVILLVAVAIFSLYSVHLLL) threads the bilayer. Residues 127–161 (KTANEGGSLVYEQLGYKAFGIPGKLAASCSITMQN) lie on the Cytoplasmic side of the membrane. Residues 162-180 (FGAMASYLYIVKYELPIVI) form a helical membrane-spanning segment. Over 181–189 (RAFLDSNDN) the chain is Extracellular. The chain crosses the membrane as a helical span at residues 190-210 (AWYTNGDYLVLIVTMSIILPL). Residues 211-218 (SLLKNLGY) are Cytoplasmic-facing. A helical transmembrane segment spans residues 219-239 (LGYTSGFSLLCMVFFLIVVIY). Residues 240 to 285 (KKFQIPCPLPENFINITVNVSQPPQTNNSTDEECCKPKYFIFNSQT) are Extracellular-facing. An intrachain disulfide couples C246 to C274. N-linked (GlcNAc...) asparagine glycans are attached at residues N254 and N258. Residues 286–306 (VYAVPILTFAFVCHPAILPMY) form a helical membrane-spanning segment. The Cytoplasmic segment spans residues 307–322 (EELKDRSRRKMQNVAN). A helical transmembrane segment spans residues 323-343 (VSFLGMFIMYLLAALFGYLTF). Topologically, residues 344-364 (NEAVEPELLHTYSKVYNFDVV) are extracellular. The chain crosses the membrane as a helical span at residues 365–385 (LLIVRLAVLTAVTLTVPVVLF). Na(+) is bound at residue T379. The Cytoplasmic segment spans residues 386–406 (PIRTSVNHLLGASKEFSWPRH). Residues 407-427 (ICITVALLVCVNILVIFVPTI) form a helical membrane-spanning segment. The Extracellular portion of the chain corresponds to 428–429 (RD). The chain crosses the membrane as a helical span at residues 430–450 (IFGFIGASAAAMLIFILPSAF). The Cytoplasmic segment spans residues 451–465 (YIKLVKKESMKSVQK). Residues 466–488 (IGATLFLIMGFLVMTGSMALIIM) traverse the membrane as a helical segment. Residues 489–504 (DWIHNALSSEEHTGGH) are Extracellular-facing.

The protein belongs to the amino acid/polyamine transporter 2 family.

It is found in the cell membrane. It carries out the reaction L-alanine(in) + Na(+)(in) = L-alanine(out) + Na(+)(out). The enzyme catalyses glycine(in) + Na(+)(in) = glycine(out) + Na(+)(out). The catalysed reaction is L-serine(in) + Na(+)(in) = L-serine(out) + Na(+)(out). It catalyses the reaction L-proline(in) + Na(+)(in) = L-proline(out) + Na(+)(out). It carries out the reaction L-methionine(in) + Na(+)(in) = L-methionine(out) + Na(+)(out). The enzyme catalyses L-histidine(in) + Na(+)(in) = L-histidine(out) + Na(+)(out). The catalysed reaction is L-asparagine(in) + Na(+)(in) = L-asparagine(out) + Na(+)(out). It catalyses the reaction L-glutamine(in) + Na(+)(in) = L-glutamine(out) + Na(+)(out). It carries out the reaction L-threonine(in) + Na(+)(in) = L-threonine(out) + Na(+)(out). The enzyme catalyses L-leucine(in) + Na(+)(in) = L-leucine(out) + Na(+)(out). The catalysed reaction is L-phenylalanine(in) + Na(+)(in) = L-phenylalanine(out) + Na(+)(out). With respect to regulation, inhibited by N-methyl-D-glucamine. Inhibited by choline. Allosteric regulation of sodium ions binding by pH. In terms of biological role, symporter that cotransports neutral amino acids and sodium ions from the extracellular to the intracellular side of the cell membrane. The transport is pH-sensitive, Li(+)-intolerant, electrogenic, driven by the Na(+) electrochemical gradient and cotransports of neutral amino acids and sodium ions with a stoichiometry of 1:1. The chain is Sodium-coupled neutral amino acid symporter 2 from Danio rerio (Zebrafish).